Here is a 72-residue protein sequence, read N- to C-terminus: Translation initiation factor IF-1 (72 aa).

The 72-residue stretch at 1–72 (MSKQDVIEFD…TKGRITYRGK (72 aa)) folds into the S1-like domain.

The protein belongs to the IF-1 family. Component of the 30S ribosomal translation pre-initiation complex which assembles on the 30S ribosome in the order IF-2 and IF-3, IF-1 and N-formylmethionyl-tRNA(fMet); mRNA recruitment can occur at any time during PIC assembly.

It is found in the cytoplasm. One of the essential components for the initiation of protein synthesis. Stabilizes the binding of IF-2 and IF-3 on the 30S subunit to which N-formylmethionyl-tRNA(fMet) subsequently binds. Helps modulate mRNA selection, yielding the 30S pre-initiation complex (PIC). Upon addition of the 50S ribosomal subunit IF-1, IF-2 and IF-3 are released leaving the mature 70S translation initiation complex. In Hydrogenovibrio crunogenus (strain DSM 25203 / XCL-2) (Thiomicrospira crunogena), this protein is Translation initiation factor IF-1.